Reading from the N-terminus, the 544-residue chain is Probable protein kinase UbiB (544 aa).

The Protein kinase domain maps to 123–501 (DFDIKPLASA…KRQQGTGKFL (379 aa)). ATP is bound by residues 129-137 (LASASIAQV) and Lys-152. Catalysis depends on Asp-287, which acts as the Proton acceptor. Helical transmembrane passes span 496–516 (GTGK…AIWI) and 519–539 (QLEP…LLSW).

This sequence belongs to the ABC1 family. UbiB subfamily.

It is found in the cell inner membrane. It participates in cofactor biosynthesis; ubiquinone biosynthesis [regulation]. Its function is as follows. Is probably a protein kinase regulator of UbiI activity which is involved in aerobic coenzyme Q (ubiquinone) biosynthesis. In Vibrio cholerae serotype O1 (strain ATCC 39315 / El Tor Inaba N16961), this protein is Probable protein kinase UbiB.